The primary structure comprises 313 residues: Ribosomal RNA small subunit methyltransferase H (313 aa).

Residues Gly-35–His-37, Asp-55, Phe-79, Asp-101, and Gln-108 contribute to the S-adenosyl-L-methionine site.

It belongs to the methyltransferase superfamily. RsmH family.

The protein localises to the cytoplasm. It carries out the reaction cytidine(1402) in 16S rRNA + S-adenosyl-L-methionine = N(4)-methylcytidine(1402) in 16S rRNA + S-adenosyl-L-homocysteine + H(+). Its function is as follows. Specifically methylates the N4 position of cytidine in position 1402 (C1402) of 16S rRNA. This chain is Ribosomal RNA small subunit methyltransferase H, found in Salmonella agona (strain SL483).